A 275-amino-acid polypeptide reads, in one-letter code: Myoblast determination protein 1 homolog 2 (275 aa).

In terms of domain architecture, bHLH spans 84 to 135 (DRRKAATMRERRRLGKVNDAFENLKRCTSNNPNQRLPKVEILRNAISYIESL). Over residues 232-265 (SGQEGSEGSPCSPQEGSILSRNGGTVPSPTNCPQ) the composition is skewed to polar residues. Positions 232 to 275 (SGQEGSEGSPCSPQEGSILSRNGGTVPSPTNCPQPSHDPIYQVL) are disordered.

As to quaternary structure, efficient DNA binding requires dimerization with another bHLH protein.

It localises to the nucleus. May act as a transcriptional activator that promotes transcription of muscle-specific target genes and plays a role in muscle differentiation. The protein is Myoblast determination protein 1 homolog 2 (myod2) of Oncorhynchus mykiss (Rainbow trout).